The primary structure comprises 124 residues: Small ribosomal subunit protein uS11 (124 aa).

It belongs to the universal ribosomal protein uS11 family. Part of the 30S ribosomal subunit. Interacts with proteins S7 and S18. Binds to IF-3.

Its function is as follows. Located on the platform of the 30S subunit, it bridges several disparate RNA helices of the 16S rRNA. Forms part of the Shine-Dalgarno cleft in the 70S ribosome. In Anaplasma marginale (strain St. Maries), this protein is Small ribosomal subunit protein uS11.